The primary structure comprises 328 residues: Sin3 histone deacetylase corepressor complex component SDS3 (328 aa).

Over residues 1 to 16 the composition is skewed to low complexity; the sequence is MSAAGLLAPAPAQAGA. The tract at residues 1–65 is disordered; the sequence is MSAAGLLAPA…DLAKHDEEDY (65 aa). Ser2 is subject to N-acetylserine. The segment at 2 to 170 is mediates interaction with USP17L2; it reads SAAGLLAPAP…IENEKLTMEL (169 aa). Composition is skewed to acidic residues over residues 23 to 37 and 45 to 54; these read YPEEDEELESAEEDE and SDEDTEDASE. Ser32 and Ser45 each carry phosphoserine. Thr49 carries the post-translational modification Phosphothreonine. Ser53 is modified (phosphoserine). Positions 56–65 are enriched in basic and acidic residues; sequence DLAKHDEEDY. Positions 66-171 form a coiled coil; sequence VEMKEQMYQD…ENEKLTMELT (106 aa). Residues Lys69, Lys178, and Lys201 each participate in a glycyl lysine isopeptide (Lys-Gly) (interchain with G-Cter in SUMO2) cross-link. Residues 188–226 are sin3 interaction domain (SID); it reads RPNDPVPIPDKRRKPAPAQLNYLLTDEQIMEDLRTLNKL. The interval 226–252 is disordered; it reads LKSPKRPASPSSPEHLPATPAESPAQR. A phosphoserine mark is found at Ser228, Ser234, and Ser237. Phosphothreonine is present on Thr244.

Belongs to the SDS3 family. In terms of assembly, interacts with HCFC1. Homodimer. Component of the SIN3 histone deacetylase (HDAC) corepressor complex. Interacts with SIN3A. Interaction with SIN3B enhances the interaction between SIN3B and HDAC1 to form a complex. Component of a mSin3A corepressor complex that contains SIN3A, SAP130, SUDS3/SAP45, ARID4B/SAP180, HDAC1 and HDAC2. Interacts with USP17L2; the interaction is direct. Interacts with FOXK2. In terms of processing, polyubiquitinated. 'Lys-63'-polyubiquitinated SUDS3 positively regulates histone deacetylation. Regulated through deubiquitination by USP17L2/USP17 that cleaves 'Lys-63'-linked ubiquitin chains.

It is found in the nucleus. Its function is as follows. Regulatory protein which represses transcription and augments histone deacetylase activity of HDAC1. May have a potential role in tumor suppressor pathways through regulation of apoptosis. May function in the assembly and/or enzymatic activity of the mSin3A corepressor complex or in mediating interactions between the complex and other regulatory complexes. The chain is Sin3 histone deacetylase corepressor complex component SDS3 (SUDS3) from Pongo abelii (Sumatran orangutan).